A 104-amino-acid polypeptide reads, in one-letter code: Large ribosomal subunit protein bL21 (104 aa).

The protein belongs to the bacterial ribosomal protein bL21 family. As to quaternary structure, part of the 50S ribosomal subunit. Contacts protein L20.

In terms of biological role, this protein binds to 23S rRNA in the presence of protein L20. The polypeptide is Large ribosomal subunit protein bL21 (Leptospira interrogans serogroup Icterohaemorrhagiae serovar copenhageni (strain Fiocruz L1-130)).